A 400-amino-acid polypeptide reads, in one-letter code: NADH dehydrogenase-like protein MT1860 (400 aa).

It belongs to the NADH dehydrogenase family. The cofactor is FAD.

The sequence is that of NADH dehydrogenase-like protein MT1860 from Mycobacterium tuberculosis (strain CDC 1551 / Oshkosh).